The following is a 305-amino-acid chain: tRNA uridine(34) hydroxylase (305 aa).

The Rhodanese domain maps to 125–219 (ADENTVVVDT…YLEEVPREQS (95 aa)). Catalysis depends on C179, which acts as the Cysteine persulfide intermediate.

The protein belongs to the TrhO family.

The catalysed reaction is uridine(34) in tRNA + AH2 + O2 = 5-hydroxyuridine(34) in tRNA + A + H2O. In terms of biological role, catalyzes oxygen-dependent 5-hydroxyuridine (ho5U) modification at position 34 in tRNAs. The sequence is that of tRNA uridine(34) hydroxylase from Brucella ovis (strain ATCC 25840 / 63/290 / NCTC 10512).